Reading from the N-terminus, the 104-residue chain is U-scoloptoxin(10)-Cw1a (104 aa).

A signal peptide spans 1 to 23; it reads MNKTVAVFFAVICVICVIKSCKT.

It belongs to the scoloptoxin-10 family. In terms of processing, contains 3 disulfide bonds. As to expression, expressed by the venom gland.

The protein resides in the secreted. This chain is U-scoloptoxin(10)-Cw1a, found in Cormocephalus westwoodi (Westwood's green centipede).